Reading from the N-terminus, the 509-residue chain is ATP synthase subunit beta (509 aa).

Residue glycine 167–threonine 174 participates in ATP binding. The segment at glutamate 476–alanine 509 is disordered. Residues serine 496 to alanine 509 show a composition bias toward basic and acidic residues.

It belongs to the ATPase alpha/beta chains family. In terms of assembly, F-type ATPases have 2 components, CF(1) - the catalytic core - and CF(0) - the membrane proton channel. CF(1) has five subunits: alpha(3), beta(3), gamma(1), delta(1), epsilon(1). CF(0) has three main subunits: a(1), b(2) and c(9-12). The alpha and beta chains form an alternating ring which encloses part of the gamma chain. CF(1) is attached to CF(0) by a central stalk formed by the gamma and epsilon chains, while a peripheral stalk is formed by the delta and b chains.

Its subcellular location is the cell membrane. It catalyses the reaction ATP + H2O + 4 H(+)(in) = ADP + phosphate + 5 H(+)(out). In terms of biological role, produces ATP from ADP in the presence of a proton gradient across the membrane. The catalytic sites are hosted primarily by the beta subunits. The chain is ATP synthase subunit beta from Mycobacterium sp. (strain KMS).